The primary structure comprises 198 residues: V-type ATP synthase subunit E 1 (198 aa).

This sequence belongs to the V-ATPase E subunit family.

In terms of biological role, produces ATP from ADP in the presence of a proton gradient across the membrane. This is V-type ATP synthase subunit E 1 from Clostridium tetani (strain Massachusetts / E88).